Here is a 150-residue protein sequence, read N- to C-terminus: Ribosome maturation factor RimP (150 aa).

This sequence belongs to the RimP family.

It is found in the cytoplasm. Its function is as follows. Required for maturation of 30S ribosomal subunits. The sequence is that of Ribosome maturation factor RimP from Thermotoga maritima (strain ATCC 43589 / DSM 3109 / JCM 10099 / NBRC 100826 / MSB8).